Consider the following 152-residue polypeptide: MTTQIELKILDARIGTEYPLPAYATPGSAGMDLRALLDAPITLAPGDTILVPTGLAIHIQDPGLCATILPRSGLGHKHGIVLGNLVGLIDSDYQGQLMVSVWNRGNDSFTMQPGERIAQLVIMPVVQASFQLVDEFNQSERGEGGFGSSGRQ.

Substrate contacts are provided by residues 71–73, Asn-84, 88–90, and Met-98; these read RSG and LID.

The protein belongs to the dUTPase family. It depends on Mg(2+) as a cofactor.

It carries out the reaction dUTP + H2O = dUMP + diphosphate + H(+). It functions in the pathway pyrimidine metabolism; dUMP biosynthesis; dUMP from dCTP (dUTP route): step 2/2. Its function is as follows. This enzyme is involved in nucleotide metabolism: it produces dUMP, the immediate precursor of thymidine nucleotides and it decreases the intracellular concentration of dUTP so that uracil cannot be incorporated into DNA. The protein is Deoxyuridine 5'-triphosphate nucleotidohydrolase of Aeromonas salmonicida (strain A449).